The primary structure comprises 39 residues: B melanoma antigen 4 (39 aa).

An N-terminal signal peptide occupies residues 1–17 (MAAGAVFLALSAQLLQA).

It belongs to the BAGE family. Not expressed in normal tissues except in testis. Expressed in melanoma, bladder and lung carcinomas.

The protein resides in the secreted. Unknown. Candidate gene encoding tumor antigens. This is B melanoma antigen 4 (BAGE4) from Homo sapiens (Human).